Reading from the N-terminus, the 299-residue chain is Prolyl 4-hydroxylase 2 (299 aa).

Topologically, residues 1-5 (MSMSR) are cytoplasmic. A helical; Signal-anchor for type II membrane protein membrane pass occupies residues 6–26 (LGLLLFVAILLVLLQSSTCLI). Residues 27 to 299 (SSPSSIINPS…GNCRRSCKAC (273 aa)) are Lumenal-facing. Positions 121-246 (NGEDLQVLRY…KWSATKWIHV (126 aa)) constitute a Fe2OG dioxygenase domain. Fe cation contacts are provided by H139 and D141. N165 is a glycosylation site (N-linked (GlcNAc...) asparagine). A Fe cation-binding site is contributed by H227. Position 237 (K237) interacts with 2-oxoglutarate. N-linked (GlcNAc...) asparagine glycosylation is found at N258 and N263. A ShKT domain is found at 259–299 (CTDVNESCERWAVLGECGKNPEYMVGTPEIPGNCRRSCKAC). Intrachain disulfides connect C259–C299, C266–C292, and C275–C296.

Belongs to the P4HA family. It depends on Fe(2+) as a cofactor. The cofactor is L-ascorbate. As to expression, expressed in epidermal root hair cells (trichoblasts).

It localises to the endoplasmic reticulum membrane. The protein localises to the golgi apparatus membrane. It catalyses the reaction L-prolyl-[collagen] + 2-oxoglutarate + O2 = trans-4-hydroxy-L-prolyl-[collagen] + succinate + CO2. Functionally, catalyzes the post-translational formation of 4-hydroxyproline in -Xaa-Pro-Gly- sequences in proline-rich peptide sequences of plant glycoproteins and other proteins. Hydroxyprolines are important constituent of many plant cell wall glycoproteins such as extensins, hydroxyproline-rich glycoproteins, lectins and arabinogalactan proteins. Possesses high affinity for leucine-rich repeat and proline-rich extensins of root cell walls that are essential for root hair development. Hydroxyprolines define the subsequent O-glycosylation sites by arabinosyltransferases which elongate the O-arabinosides on extensins. Has low affinity for the substrates tested in vitro. In Arabidopsis thaliana (Mouse-ear cress), this protein is Prolyl 4-hydroxylase 2.